Consider the following 1239-residue polypeptide: DNA topoisomerase 2 (1239 aa).

ATP-binding positions include asparagine 65, asparagine 96, 124-126 (SSN), 137-144 (GRHGYGAK), and 354-356 (QSK). Positions 434-548 (RTLIVTEGDS…SLLQHNPGYI (115 aa)) constitute a Toprim domain. Positions 440, 517, and 519 each coordinate Mg(2+). The Topo IIA-type catalytic domain maps to 685–1101 (IPHCVDGLKP…TPVKMWLTDL (417 aa)). Tyrosine 775 acts as the O-(5'-phospho-DNA)-tyrosine intermediate in catalysis. An interaction with DNA region spans residues 956–965 (ALSQRIYING). Residues 1167–1206 (PASKRKPEDTYGGALSSGGSTRNVGKRLTGARGAKKKKVV) are disordered.

This sequence belongs to the type II topoisomerase family. Homodimer. The cofactor is Mg(2+). Mn(2+) serves as cofactor. Requires Ca(2+) as cofactor.

It localises to the nucleus. Its subcellular location is the mitochondrion matrix. The protein resides in the kinetoplast. The catalysed reaction is ATP-dependent breakage, passage and rejoining of double-stranded DNA.. In terms of biological role, control of topological states of DNA by transient breakage and subsequent rejoining of DNA strands. Topoisomerase II makes double-strand breaks. The chain is DNA topoisomerase 2 (TOP2) from Crithidia fasciculata.